A 138-amino-acid chain; its full sequence is Small ribosomal subunit protein uS11c (138 aa).

The interval 1–23 is disordered; the sequence is MAKPILRIGSRKNTRSGSRKNVR. A compositionally biased stretch (basic residues) spans 9–23; it reads GSRKNTRSGSRKNVR.

It belongs to the universal ribosomal protein uS11 family. Part of the 30S ribosomal subunit.

The protein localises to the plastid. Its subcellular location is the chloroplast. This chain is Small ribosomal subunit protein uS11c, found in Aethionema grandiflorum (Persian stone-cress).